A 490-amino-acid polypeptide reads, in one-letter code: GDP-fucose protein O-fucosyltransferase 2 (490 aa).

The first 25 residues, 1–25 (MRGSWPRLGFPALLLLLHLLTGSDA), serve as a signal peptide directing secretion. 2 N-linked (GlcNAc...) asparagine glycosylation sites follow: Asn29 and Asn79. 81-85 (SEGFN) contributes to the GDP-beta-L-fucose binding site. The active-site Proton acceptor is Glu82. A disulfide bond links Cys203 and Cys226. 336–338 (HLR) is a binding site for GDP-beta-L-fucose. Residue Asn368 is glycosylated (N-linked (GlcNAc...) asparagine). Residues Asp418 and 435–436 (TF) contribute to the GDP-beta-L-fucose site. A disulfide bridge connects residues Cys459 and Cys466.

This sequence belongs to the glycosyltransferase 68 family.

Its subcellular location is the endoplasmic reticulum. It is found in the golgi apparatus. It catalyses the reaction L-seryl-[protein] + GDP-beta-L-fucose = 3-O-(alpha-L-fucosyl)-L-seryl-[protein] + GDP + H(+). The catalysed reaction is L-threonyl-[protein] + GDP-beta-L-fucose = 3-O-(alpha-L-fucosyl)-L-threonyl-[protein] + GDP + H(+). The protein operates within protein modification; protein glycosylation. Does not require divalent metal ions for optimal activity. Catalyzes the reaction that attaches fucose through an O-glycosidic linkage to a conserved serine or threonine residue in the consensus sequence C1-X-X-S/T-C2 of thrombospondin type I repeats (TSRs) where C1 and C2 are the first and second cysteines of the repeat, respectively. O-fucosylates members of several protein families including the ADAMTS, the thrombospondin (TSP) and spondin families. The chain is GDP-fucose protein O-fucosyltransferase 2 from Drosophila melanogaster (Fruit fly).